The primary structure comprises 887 residues: Translation initiation factor IF-2 (887 aa).

The segment at 1 to 259 (MSDEQDQGET…KVGDDRRRGA (259 aa)) is disordered. Residues 62–94 (GRPSAPSRASGGAAAPRGLTAAEQAARQRAVVE) show a composition bias toward low complexity. Composition is skewed to basic and acidic residues over residues 95–111 (QQREAARLEAERREQEK) and 119–158 (EEARRKAEEEARAAEEAERLRAEEEARRREEEEAERRRAA). Residues 159 to 210 (EASQATAAPPAPAAAASPRAAMPAPTAAPARPGAAPARRTAPVPPATSASET) show a composition bias toward low complexity. Over residues 250–259 (KVGDDRRRGA) the composition is skewed to basic and acidic residues. One can recognise a tr-type G domain in the interval 386–556 (VRPPVVTIMG…LLQAELLDLK (171 aa)). The tract at residues 395–402 (GHVDHGKT) is G1. 395-402 (GHVDHGKT) is a binding site for GTP. The segment at 420 to 424 (GITQH) is G2. Positions 442-445 (DTPG) are G3. GTP contacts are provided by residues 442-446 (DTPGH) and 496-499 (NKID). The G4 stretch occupies residues 496 to 499 (NKID). Residues 532–534 (SAL) form a G5 region.

It belongs to the TRAFAC class translation factor GTPase superfamily. Classic translation factor GTPase family. IF-2 subfamily.

The protein localises to the cytoplasm. In terms of biological role, one of the essential components for the initiation of protein synthesis. Protects formylmethionyl-tRNA from spontaneous hydrolysis and promotes its binding to the 30S ribosomal subunits. Also involved in the hydrolysis of GTP during the formation of the 70S ribosomal complex. In Acidiphilium cryptum (strain JF-5), this protein is Translation initiation factor IF-2.